The sequence spans 1040 residues: Multidrug resistance protein MdtB (1040 aa).

11 helical membrane-spanning segments follow: residues 15–37 (LFIL…GIIG), 345–362 (FELM…YLFL), 367–389 (ATII…MVFL), 396–418 (LTLM…VIEN), 438–460 (GEIG…PLLF), 472–494 (FAVT…TPMM), 535–557 (HPWL…WITI), 867–889 (VWLI…ESFI), 909–931 (LIIA…IGIV), 968–990 (ILMT…GVGA), and 1000–1022 (MVGG…YLLF).

It belongs to the resistance-nodulation-cell division (RND) (TC 2.A.6) family. MdtB subfamily. As to quaternary structure, part of a tripartite efflux system composed of MdtA, MdtB and MdtC. MdtB forms a heteromultimer with MdtC.

The protein localises to the cell inner membrane. The sequence is that of Multidrug resistance protein MdtB from Salmonella typhi.